Reading from the N-terminus, the 179-residue chain is Diphosphoinositol polyphosphate phosphohydrolase 2 (179 aa).

Residues arginine 9, 17-19 (KKR), and 38-40 (SSR) contribute to the substrate site. One can recognise a Nudix hydrolase domain in the interval 17 to 143 (KKRAACLCFR…VHAEYLEKLK (127 aa)). 2 residues coordinate Mg(2+): glycine 49 and glutamate 65. Positions 50–71 (GGMEPEEEPGGAAVREVYEEAG) match the Nudix box motif. Catalysis depends on glutamate 68, which acts as the Proton acceptor. Glutamate 69 is a binding site for Mg(2+). Residues 88–90 (RKH), arginine 114, and lysine 132 contribute to the substrate site.

Belongs to the Nudix hydrolase family. DIPP subfamily. Requires Mg(2+) as cofactor. Mn(2+) is required as a cofactor.

The protein resides in the cytoplasm. It catalyses the reaction diphospho-myo-inositol polyphosphate + H2O = myo-inositol polyphosphate + phosphate.. It carries out the reaction 5-diphospho-1D-myo-inositol 1,2,3,4,6-pentakisphosphate + H2O = 1D-myo-inositol hexakisphosphate + phosphate + H(+). The enzyme catalyses 3,5-bis(diphospho)-1D-myo-inositol 1,2,4,6-tetrakisphosphate + H2O = 3-diphospho-1D-myo-inositol 1,2,4,5,6-pentakisphosphate + phosphate + 2 H(+). The catalysed reaction is 5-diphospho-1D-myo-inositol 1,3,4,6-tetrakisphosphate + H2O = 1D-myo-inositol 1,3,4,5,6-pentakisphosphate + phosphate + H(+). It catalyses the reaction P(1),P(6)-bis(5'-adenosyl) hexaphosphate + H2O = 2 ATP + 2 H(+). It carries out the reaction P(1),P(5)-bis(5'-adenosyl) pentaphosphate + H2O = ADP + ATP + 2 H(+). The enzyme catalyses 5-phospho-alpha-D-ribose 1-diphosphate + H2O = alpha-D-ribose 1,5-bisphosphate + phosphate + H(+). Functionally, cleaves the beta-phosphate from diphosphoinositol polyphosphates such as PP-InsP5 (diphosphoinositol pentakisphosphate), PP-InsP4 (diphosphoinositol tetrakisphosphate) and [PP]2-InsP4 (bisdiphosphoinositol tetrakisphosphate), suggesting that it may play a role in signal transduction. Diadenosine polyphosphates, particularly Ap6A (P(1),P(6)-bis(5a-adenosyl) hexaphosphate) and Ap5A (P(1),P(5)-bis(5'-adenosyl) pentaphosphate) are downstream effectors of a signaling cascade that regulates cardiac KATP channels, can also be substrates, although with lower preference than the diphosphoinositol polyphosphates. Can also catalyze the hydrolysis of 5-phosphoribose 1-diphosphate, generating the glycolytic activator ribose 1,5-bisphosphate. Does not play a role in U8 snoRNA decapping activity. Binds U8 snoRNA. This is Diphosphoinositol polyphosphate phosphohydrolase 2 from Mus musculus (Mouse).